We begin with the raw amino-acid sequence, 716 residues long: Lamin-like protein (716 aa).

2 stretches are compositionally biased toward basic residues: residues methionine 1–arginine 10 and lysine 35–alanine 45. Residues methionine 1–isoleucine 107 form a disordered region. Over residues isoleucine 62 to isoleucine 107 the composition is skewed to low complexity. A coiled-coil region spans residues leucine 130 to lysine 450. The 384-residue stretch at glutamate 132 to valine 515 folds into the IF rod domain. The Nuclear localization signal signature appears at lysine 519–arginine 522. The disordered stretch occupies residues lysine 519 to phenylalanine 584. Over residues alanine 532–glutamine 545 the composition is skewed to polar residues. Low complexity predominate over residues serine 546–serine 564. A compositionally biased stretch (polar residues) spans histidine 565–phenylalanine 584. The region spanning proline 575–alanine 698 is the LTD domain. A CAAX motif motif is present at residues cysteine 713–methionine 716.

The protein belongs to the intermediate filament family. As to quaternary structure, homodimer. Lamin dimers then assemble into dimeric head-to-tail polymers. Ultimately, two head-to-tail polymers assemble laterally into a protofilament with a uniformly shaped rod of 3.5 nm in diameter.

Its subcellular location is the nucleus lamina. The protein resides in the nucleus envelope. It localises to the nucleus inner membrane. Its function is as follows. Lamins are intermediate filament proteins that assemble into a filamentous meshwork, and which constitute the major components of the nuclear lamina, a fibrous layer on the nucleoplasmic side of the inner nuclear membrane. Lamins provide a framework for the nuclear envelope, bridging the nuclear envelope and chromatin, thereby playing an important role in nuclear assembly, chromatin organization, nuclear membrane and telomere dynamics. The structural integrity of the lamina is strictly controlled by the cell cycle, as seen by the disintegration and formation of the nuclear envelope in prophase and telophase, respectively. Helps to maintain integrity of nuclear structures in response to mechanical stress. The sequence is that of Lamin-like protein from Dictyostelium discoideum (Social amoeba).